A 185-amino-acid polypeptide reads, in one-letter code: Phosphatidylglycerophosphatase GEP4, mitochondrial (185 aa).

A Phosphoryl acceptor motif is present at residues Asp-45–Cys-49.

Belongs to the GEP4 family.

The protein localises to the mitochondrion inner membrane. The enzyme catalyses a 1,2-diacyl-sn-glycero-3-phospho-(1'-sn-glycero-3'-phosphate) + H2O = a 1,2-diacyl-sn-glycero-3-phospho-(1'-sn-glycerol) + phosphate. It functions in the pathway phospholipid metabolism; phosphatidylglycerol biosynthesis; phosphatidylglycerol from CDP-diacylglycerol: step 2/2. Functionally, phosphatidylglycerophosphatase involved in the biosynthesis of cardiolipin (CL), a unique dimeric phosphoglycerolipid predominantly present in mitochondrial membranes and which has important functions for cellular energy metabolism, mitochondrial dynamics and the initiation of apoptotic pathways. Required for the stability of respiratory chain supercomplexes and for growth at elevated temperature, in presence of ethidium bromide or in absence of prohibitins. The protein is Phosphatidylglycerophosphatase GEP4, mitochondrial (GEP4) of Saccharomyces cerevisiae (strain ATCC 204508 / S288c) (Baker's yeast).